The following is a 511-amino-acid chain: ATP synthase subunit alpha 2 (511 aa).

173–180 is an ATP binding site; the sequence is GDRQTGKS.

This sequence belongs to the ATPase alpha/beta chains family. In terms of assembly, F-type ATPases have 2 components, CF(1) - the catalytic core - and CF(0) - the membrane proton channel. CF(1) has five subunits: alpha(3), beta(3), gamma(1), delta(1), epsilon(1). CF(0) has three main subunits: a(1), b(2) and c(9-12). The alpha and beta chains form an alternating ring which encloses part of the gamma chain. CF(1) is attached to CF(0) by a central stalk formed by the gamma and epsilon chains, while a peripheral stalk is formed by the delta and b chains.

It is found in the cell inner membrane. It catalyses the reaction ATP + H2O + 4 H(+)(in) = ADP + phosphate + 5 H(+)(out). Functionally, produces ATP from ADP in the presence of a proton gradient across the membrane. The alpha chain is a regulatory subunit. In Nitrosospira multiformis (strain ATCC 25196 / NCIMB 11849 / C 71), this protein is ATP synthase subunit alpha 2.